The following is a 387-amino-acid chain: Alkanesulfonate monooxygenase (387 aa).

Belongs to the SsuD family.

It carries out the reaction an alkanesulfonate + FMNH2 + O2 = an aldehyde + FMN + sulfite + H2O + 2 H(+). Functionally, catalyzes the desulfonation of aliphatic sulfonates. In Ralstonia pickettii (strain 12J), this protein is Alkanesulfonate monooxygenase.